A 510-amino-acid chain; its full sequence is Beta-glucosidase 12 (510 aa).

Positions 1-24 (MAAAGAMPGGLLLTFLLLAVVASG) are cleaved as a signal peptide. An a beta-D-glucoside-binding site is contributed by Q53. N-linked (GlcNAc...) asparagine glycosylation occurs at N122. A beta-D-glucoside-binding positions include H157 and 202–203 (NE). The Proton donor role is filled by E203. Cystine bridges form between C208–C243 and C222–C230. N-linked (GlcNAc...) asparagine glycosylation occurs at N229. Y346 is a binding site for a beta-D-glucoside. 2 N-linked (GlcNAc...) asparagine glycosylation sites follow: N361 and N371. E417 is an a beta-D-glucoside binding site. Catalysis depends on E417, which acts as the Nucleophile. N-linked (GlcNAc...) asparagine glycosylation is present at N425. A beta-D-glucoside-binding positions include W466, 473–474 (EW), and F482.

This sequence belongs to the glycosyl hydrolase 1 family.

The protein resides in the secreted. The catalysed reaction is Hydrolysis of terminal, non-reducing beta-D-glucosyl residues with release of beta-D-glucose.. Functionally, hydrolyzes p-nitrophenyl beta-D-glucoside, p-nitrophenyl beta-D-galactoside, p-nitrophenyl beta-D-xyloside, p-nitrophenyl beta-D-fucoside, p-nitrophenyl beta-L-arabinoside, cello-oligosaccharides and laminaribiose. The protein is Beta-glucosidase 12 of Oryza sativa subsp. indica (Rice).